A 220-amino-acid chain; its full sequence is Pyrrolidone-carboxylate peptidase 1 (220 aa).

Catalysis depends on residues E80, C143, and H172.

Belongs to the peptidase C15 family. Homotetramer.

It is found in the cytoplasm. It catalyses the reaction Release of an N-terminal pyroglutamyl group from a polypeptide, the second amino acid generally not being Pro.. Functionally, removes 5-oxoproline from various penultimate amino acid residues except L-proline. The sequence is that of Pyrrolidone-carboxylate peptidase 1 from Photorhabdus laumondii subsp. laumondii (strain DSM 15139 / CIP 105565 / TT01) (Photorhabdus luminescens subsp. laumondii).